The chain runs to 100 residues: uncharacterized protein (100 aa).

Positions 78–100 (NNGNLDFKGRADERRQPVSNLRM) are disordered. The span at 84–93 (FKGRADERRQ) shows a compositional bias: basic and acidic residues.

This is an uncharacterized protein from Saccharomyces cerevisiae (strain ATCC 204508 / S288c) (Baker's yeast).